A 228-amino-acid polypeptide reads, in one-letter code: Odorant-binding protein 47 (228 aa).

6 cysteine pairs are disulfide-bonded: Cys-60-Cys-225, Cys-73-Cys-215, Cys-74-Cys-204, Cys-88-Cys-114, Cys-110-Cys-185, and Cys-158-Cys-195. Asn-117 carries N-linked (GlcNAc...) asparagine glycosylation.

Belongs to the PBP/GOBP family. Post-translationally, glycosylated. Head without antennae (at protein level).

It is found in the secreted. Present in the aqueous fluid surrounding olfactory sensory dendrites and are thought to aid in the capture and transport of hydrophobic odorants into and through this fluid. Binds N-phenyl-1-naphthylamine, menthol, citronellal, 1-dodecanol, decanal, p-tert-butylbenzophenone, 4-hydroxy-4'-isopropylazobenzene, 2-pyrrolyl-p-methyl-azobenzene and indole. Expressed in mosquito head but barely detectable in antennae, which suggests that it may be present in mouth structures, such as palpi and proboscis, and may have a function in taste. This Anopheles gambiae (African malaria mosquito) protein is Odorant-binding protein 47.